A 337-amino-acid polypeptide reads, in one-letter code: Glyceraldehyde-3-phosphate dehydrogenase 3, cytosolic (337 aa).

Residues 13–14, aspartate 35, and arginine 82 contribute to the NAD(+) site; that span reads RI. D-glyceraldehyde 3-phosphate contacts are provided by residues 153–155, threonine 184, 213–214, and arginine 236; these read SCT and TG. Cysteine 154 (nucleophile) is an active-site residue. Residue asparagine 318 coordinates NAD(+).

Belongs to the glyceraldehyde-3-phosphate dehydrogenase family. As to quaternary structure, homotetramer.

Its subcellular location is the cytoplasm. The enzyme catalyses D-glyceraldehyde 3-phosphate + phosphate + NAD(+) = (2R)-3-phospho-glyceroyl phosphate + NADH + H(+). Its pathway is carbohydrate degradation; glycolysis; pyruvate from D-glyceraldehyde 3-phosphate: step 1/5. Its function is as follows. Key enzyme in glycolysis that catalyzes the first step of the pathway by converting D-glyceraldehyde 3-phosphate (G3P) into 3-phospho-D-glyceroyl phosphate. Essential for the maintenance of cellular ATP levels and carbohydrate metabolism. The chain is Glyceraldehyde-3-phosphate dehydrogenase 3, cytosolic (GAPC3) from Oryza sativa subsp. japonica (Rice).